The chain runs to 144 residues: 3-hydroxyacyl-[acyl-carrier-protein] dehydratase FabZ (144 aa).

The active site involves His48.

This sequence belongs to the thioester dehydratase family. FabZ subfamily.

The protein localises to the cytoplasm. The catalysed reaction is a (3R)-hydroxyacyl-[ACP] = a (2E)-enoyl-[ACP] + H2O. Its function is as follows. Involved in unsaturated fatty acids biosynthesis. Catalyzes the dehydration of short chain beta-hydroxyacyl-ACPs and long chain saturated and unsaturated beta-hydroxyacyl-ACPs. The sequence is that of 3-hydroxyacyl-[acyl-carrier-protein] dehydratase FabZ from Listeria innocua serovar 6a (strain ATCC BAA-680 / CLIP 11262).